A 210-amino-acid polypeptide reads, in one-letter code: Protein GrpE (210 aa).

The segment at 191–210 is disordered; that stretch reads KGGPKPAEAETNSVFDEKDA.

This sequence belongs to the GrpE family. Homodimer.

Its subcellular location is the cytoplasm. Participates actively in the response to hyperosmotic and heat shock by preventing the aggregation of stress-denatured proteins, in association with DnaK and GrpE. It is the nucleotide exchange factor for DnaK and may function as a thermosensor. Unfolded proteins bind initially to DnaJ; upon interaction with the DnaJ-bound protein, DnaK hydrolyzes its bound ATP, resulting in the formation of a stable complex. GrpE releases ADP from DnaK; ATP binding to DnaK triggers the release of the substrate protein, thus completing the reaction cycle. Several rounds of ATP-dependent interactions between DnaJ, DnaK and GrpE are required for fully efficient folding. The sequence is that of Protein GrpE from Rhizobium etli (strain CIAT 652).